A 280-amino-acid polypeptide reads, in one-letter code: Probable cell division protein WhiA (280 aa).

The segment at residues 246-279 (SLEQIAQFFERKYKVQITRSGIQHLNAKLKKLNQ) is a DNA-binding region (H-T-H motif).

Belongs to the WhiA family.

Functionally, involved in cell division and chromosome segregation. The protein is Probable cell division protein WhiA of Mycoplasma pneumoniae (strain ATCC 29342 / M129 / Subtype 1) (Mycoplasmoides pneumoniae).